The following is a 260-amino-acid chain: Isoprenyl transferase (260 aa).

The active site involves Asp-38. Asp-38 serves as a coordination point for Mg(2+). Substrate is bound by residues Gly-39–Arg-42, Trp-43, Arg-51, His-55, and Ser-83–Glu-85. Residue Asn-86 is the Proton acceptor of the active site. Residues Trp-87, Arg-89, Arg-206, and Arg-212–Ser-214 each bind substrate. Glu-225 contacts Mg(2+).

It belongs to the UPP synthase family. In terms of assembly, homodimer. It depends on Mg(2+) as a cofactor.

In terms of biological role, catalyzes the condensation of isopentenyl diphosphate (IPP) with allylic pyrophosphates generating different type of terpenoids. The protein is Isoprenyl transferase of Heliobacterium mobile (Heliobacillus mobilis).